The primary structure comprises 82 residues: Small ribosomal subunit protein eS21 (82 aa).

It belongs to the eukaryotic ribosomal protein eS21 family.

The sequence is that of Small ribosomal subunit protein eS21 (RPS21) from Cyanophora paradoxa.